The chain runs to 139 residues: Putative pre-16S rRNA nuclease (139 aa).

The protein belongs to the YqgF nuclease family.

Its subcellular location is the cytoplasm. In terms of biological role, could be a nuclease involved in processing of the 5'-end of pre-16S rRNA. This chain is Putative pre-16S rRNA nuclease, found in Bacillus licheniformis (strain ATCC 14580 / DSM 13 / JCM 2505 / CCUG 7422 / NBRC 12200 / NCIMB 9375 / NCTC 10341 / NRRL NRS-1264 / Gibson 46).